A 426-amino-acid chain; its full sequence is Serine/threonine-protein kinase SRPK (426 aa).

The span at 1–23 (MENIFKEKEKGKEKAKEEEKEND) shows a compositional bias: basic and acidic residues. Residues 1–40 (MENIFKEKEKGKEKAKEEEKENDSGDLFDSEDEGTEDYKK) form a disordered region. Acidic residues predominate over residues 24–35 (SGDLFDSEDEGT). Positions 56–419 (YRIVKKLGWG…ARDSLEHPYM (364 aa)) constitute a Protein kinase domain. ATP is bound by residues 62–70 (LGWGHFSTV) and Lys-86. Residue Asp-188 is the Proton acceptor of the active site. A Nuclear localization signal motif is present at residues 318–328 (PKKGDKYDKTD).

This sequence belongs to the protein kinase superfamily. CMGC Ser/Thr protein kinase family.

It localises to the nucleus. It catalyses the reaction L-seryl-[protein] + ATP = O-phospho-L-seryl-[protein] + ADP + H(+). The catalysed reaction is L-threonyl-[protein] + ATP = O-phospho-L-threonyl-[protein] + ADP + H(+). In terms of biological role, phosphorylates serine/arginine-rich protein PSR. The chain is Serine/threonine-protein kinase SRPK from Physarum polycephalum (Slime mold).